Reading from the N-terminus, the 827-residue chain is MWALRSLLRPLGLRTMSQGSARRPRPPKDPLRHLRTREKRGPGWGPGGPNTVYLQVVAAGGRDAAAALYVFSEYNRYLFNCGEGVQRLMQEHKLKVARLDNIFLTRMHWSNVGGLCGMILTLKETGLPKCVLSGPPQLEKYLEAIKIFSGPLKGIDLAVRPHSAPEYKDETMTVYQVPIHSERRCGEQEPSRSPKRSPNRLSPKQSSSDPGSAENGQCLPEGSSAGVNGKAWGRDPSLVVAFVCKLHLRKGNFLVLKAKELGLPVGTAAIAPIIAAVKDGKSITYEGREIAAEELCTPPDPGLVFIVVECPDEGFIQPICENDTFQRYQGEADAPVAVVVHIAPESVLIDSRYQQWMERFGPDTQHLILNENCPSVHNLRSHKIQTQLSLIHPDIFPQLTSFHSKEEGSTFSLPTVRGECLLKYHVRPKREWQRDTTLDCNTDEFIAEALELPNFQESVEEYRKNMQASPAPAEKRSQYPEIVFLGTGSAIPMKIRNVSSTLVNLSPDKSVLLDCGEGTFGQLCRHYGQQIDRVLCNLTAVFVSHLHADHHTGLLNILLQREHALASLGKPFQPLLVVAPTQLRAWLQQYHNQCQEILHHISMIPAKCLQKGAEVPSPPVERLISLLLETCDLQEFQTCLVRHCKHAFGCALVHSSGWKVVYSGDTMPCEALVQMGKDATLLIHEATLEDGLEEEAVEKTHSTTSQAIGVGMRMNAEFIMLNHFSQRYAKIPLFSPDFNEKVGIAFDHMKVCFGDFPTVPKLIPPLKALFADDIEEMVERREKRELRLVRAALLTQQADSSEDREPHQKRAHSEEPHSPQSKKVRAQ.

Residues Met1–Met16 constitute a mitochondrion transit peptide. Disordered stretches follow at residues Thr15 to Pro46 and Ser181 to Pro220. Residues Ser181–Arg192 show a composition bias toward basic and acidic residues. Ser193, Ser197, Ser202, Ser207, Ser617, and Ser735 each carry phosphoserine. Polar residues predominate over residues Asn199–Pro210. Residues Leu794–Gln827 form a disordered region. Position 795 is a phosphothreonine (Thr795). Ser800 is modified (phosphoserine). The span at Ser801–His817 shows a compositional bias: basic and acidic residues. At Ser818 the chain carries Phosphoserine.

It belongs to the RNase Z family. Homodimer. Interacts with PTCD1. Zn(2+) is required as a cofactor.

The protein resides in the mitochondrion. It is found in the mitochondrion matrix. It localises to the mitochondrion nucleoid. Its subcellular location is the nucleus. It carries out the reaction Endonucleolytic cleavage of RNA, removing extra 3' nucleotides from tRNA precursor, generating 3' termini of tRNAs. A 3'-hydroxy group is left at the tRNA terminus and a 5'-phosphoryl group is left at the trailer molecule.. Its function is as follows. Zinc phosphodiesterase, which displays mitochondrial tRNA 3'-processing endonuclease activity. Involved in tRNA maturation, by removing a 3'-trailer from precursor tRNA. Associates with mitochondrial DNA complexes at the nucleoids to initiate RNA processing and ribosome assembly. The protein is Zinc phosphodiesterase ELAC protein 2 (Elac2) of Rattus norvegicus (Rat).